The primary structure comprises 369 residues: Phosphoribosyl pyrophosphate synthase-associated protein 2 (369 aa).

Met-1 is modified (N-acetylmethionine). Thr-5 carries the post-translational modification Phosphothreonine. Phosphoserine is present on residues Ser-219, Ser-227, and Ser-233.

It belongs to the ribose-phosphate pyrophosphokinase family. As to quaternary structure, binds to PRPS1 and PRPS2. In terms of tissue distribution, ubiquitous.

Seems to play a negative regulatory role in 5-phosphoribose 1-diphosphate synthesis. This is Phosphoribosyl pyrophosphate synthase-associated protein 2 (PRPSAP2) from Homo sapiens (Human).